Consider the following 73-residue polypeptide: Translational regulator CsrA (73 aa).

This sequence belongs to the CsrA/RsmA family. Homodimer; the beta-strands of each monomer intercalate to form a hydrophobic core, while the alpha-helices form wings that extend away from the core.

Its subcellular location is the cytoplasm. Functionally, a translational regulator that binds mRNA to regulate translation initiation and/or mRNA stability. Usually binds in the 5'-UTR at or near the Shine-Dalgarno sequence preventing ribosome-binding, thus repressing translation. Its main target seems to be the major flagellin gene, while its function is anatagonized by FliW. This is Translational regulator CsrA from Lachnospira eligens (strain ATCC 27750 / DSM 3376 / VPI C15-48 / C15-B4) (Eubacterium eligens).